The primary structure comprises 341 residues: Hyaluronan and proteoglycan link protein 2 (341 aa).

A signal peptide spans 1-27; it reads MPSRIPLPAFCCFLLPWAFTSFHKALG. One can recognise an Ig-like V-type domain in the interval 35 to 143; sequence PHYLLPPIHE…GIEDESVALT (109 aa). 5 disulfide bridges follow: Cys58/Cys129, Cys171/Cys241, Cys195/Cys216, Cys266/Cys337, and Cys291/Cys312. Link domains lie at 149–243 and 246–339; these read VVFP…FCFT and LAGQ…YCYA.

The protein belongs to the HAPLN family. Brain. Predominantly expressed by neurons. Colocalizes with versican V2 in developing and adult cerebellar white matter and at the nodes of Ranvier.

The protein resides in the secreted. The protein localises to the extracellular space. It is found in the extracellular matrix. In terms of biological role, mediates a firm binding of versican V2 to hyaluronic acid. May play a pivotal role in the formation of the hyaluronan-associated matrix in the central nervous system (CNS) which facilitates neuronal conduction and general structural stabilization. Binds to hyaluronic acid. This is Hyaluronan and proteoglycan link protein 2 (Hapln2) from Mus musculus (Mouse).